Here is a 290-residue protein sequence, read N- to C-terminus: 4-hydroxy-tetrahydrodipicolinate synthase (290 aa).

Position 44 (Thr44) interacts with pyruvate. Tyr132 functions as the Proton donor/acceptor in the catalytic mechanism. The active-site Schiff-base intermediate with substrate is the Lys160. Pyruvate is bound at residue Ile202.

Belongs to the DapA family. As to quaternary structure, homotetramer; dimer of dimers.

The protein resides in the cytoplasm. The catalysed reaction is L-aspartate 4-semialdehyde + pyruvate = (2S,4S)-4-hydroxy-2,3,4,5-tetrahydrodipicolinate + H2O + H(+). Its pathway is amino-acid biosynthesis; L-lysine biosynthesis via DAP pathway; (S)-tetrahydrodipicolinate from L-aspartate: step 3/4. In terms of biological role, catalyzes the condensation of (S)-aspartate-beta-semialdehyde [(S)-ASA] and pyruvate to 4-hydroxy-tetrahydrodipicolinate (HTPA). In Pelobacter propionicus (strain DSM 2379 / NBRC 103807 / OttBd1), this protein is 4-hydroxy-tetrahydrodipicolinate synthase.